We begin with the raw amino-acid sequence, 346 residues long: Trans-enoyl reductase FFUJ_12240 (346 aa).

Position 40–43 (40–43) interacts with NADP(+); that stretch reads HDAK. A substrate-binding site is contributed by 124 to 131; sequence LAIATAGL. Residues 157–160, 180–183, Tyr198, and 245–246 each bind NADP(+); these read ATAT, SPSN, and LE. Substrate is bound at residue 266 to 270; it reads APSIL. Position 335-336 (335-336) interacts with NADP(+); the sequence is VH.

Belongs to the zinc-containing alcohol dehydrogenase family.

Its function is as follows. Trans-enoyl reductase; part of the gene cluster that mediates the biosynthesis of fujikurins A-D, secondary metabolites playing a role during rice infection. The polyketide synthase PKS19 acts with the trans-enoyl reductase FFUJ_12240 and the polyketide transferase FFUJ_12241 to produce fujikurins, however, the biosynthesis pathway has not been identified yet. The protein is Trans-enoyl reductase FFUJ_12240 of Gibberella fujikuroi (strain CBS 195.34 / IMI 58289 / NRRL A-6831) (Bakanae and foot rot disease fungus).